A 360-amino-acid polypeptide reads, in one-letter code: Serine/threonine-protein kinase SRK2H (360 aa).

The 257-residue stretch at 4–260 (YEVVKDLGAG…LKEIKKHPWY (257 aa)) folds into the Protein kinase domain. ATP-binding positions include 10–18 (LGAGNFGVA) and Lys-33. Asp-123 functions as the Proton acceptor in the catalytic mechanism. Positions 298-360 (EARNPAPSSN…AHSCQEPPKA (63 aa)) are disordered. Residues 313–343 (DDDEEDVEDEVEEEEEEEEEEEEEEEEEEDE) show a composition bias toward acidic residues. Residues 344-360 (YEKHVKEAHSCQEPPKA) are compositionally biased toward basic and acidic residues.

Belongs to the protein kinase superfamily. Ser/Thr protein kinase family. As to expression, expressed in seedlings.

It carries out the reaction L-seryl-[protein] + ATP = O-phospho-L-seryl-[protein] + ADP + H(+). The enzyme catalyses L-threonyl-[protein] + ATP = O-phospho-L-threonyl-[protein] + ADP + H(+). The sequence is that of Serine/threonine-protein kinase SRK2H (SRK2H) from Arabidopsis thaliana (Mouse-ear cress).